Consider the following 127-residue polypeptide: Small ribosomal subunit protein uS13 (127 aa).

The disordered stretch occupies residues 93–127 (RQGLPVRGQRTRTNGRTRRGRRVTVAGKKKAPAKK). Positions 101–127 (QRTRTNGRTRRGRRVTVAGKKKAPAKK) are enriched in basic residues.

This sequence belongs to the universal ribosomal protein uS13 family. As to quaternary structure, part of the 30S ribosomal subunit. Forms a loose heterodimer with protein S19. Forms two bridges to the 50S subunit in the 70S ribosome.

In terms of biological role, located at the top of the head of the 30S subunit, it contacts several helices of the 16S rRNA. In the 70S ribosome it contacts the 23S rRNA (bridge B1a) and protein L5 of the 50S subunit (bridge B1b), connecting the 2 subunits; these bridges are implicated in subunit movement. Contacts the tRNAs in the A and P-sites. This Crocosphaera subtropica (strain ATCC 51142 / BH68) (Cyanothece sp. (strain ATCC 51142)) protein is Small ribosomal subunit protein uS13.